Reading from the N-terminus, the 730-residue chain is Transcription factor verF (730 aa).

A C2H2-type 1 zinc finger spans residues 19-41; it reads YECSLCLKRYKRREHLFRHIGSH. The segment at 47-69 adopts a C2H2-type 2; atypical zinc-finger fold; that stretch reads YQCNSCDGAFQRADVLKRHLRTC. Positions 83–109 form a DNA-binding region, zn(2)-C6 fungal-type; that stretch reads CDRCVRQKKACSSHQPCHSCAKKGAQC. A compositionally biased stretch (polar residues) spans 120–129; it reads RLSQHSSTNH. Positions 120–151 are disordered; that stretch reads RLSQHSSTNHTPKDQELSTQFTNPPPPPSTST.

The protein resides in the nucleus. Transcription factor; part of the gene cluster that mediates the biosynthesis of the neurotoxin verrucosidin, a methylated alpha-pyrone polyketide that inhibits oxidative phosphorylation in mitochondria and thereby causes neurological diseases. This Penicillium polonicum protein is Transcription factor verF.